Consider the following 484-residue polypeptide: MKFKQDFFTQLPEFYSQVYPQGITKPEWLAWSDDAAQLIGLSQPTDELLLGLSGNAAVDGATYYAQVYSGHQFGGYTPRLGDGRSIILGEAIGPNGAWDVALKGGGPTPYSRRGDGRAVMRSAVREFLVSEALHHLHVPTTRALAVIGSDLPVWRESQETAAITVRLARSHIRFGHFEFFCHSERGRADKLIQLLNFTITQHYPHLSCDAAGYKAWFLQVVQDTAKMIAHWQAVGFAHGVMNTDNMSILGDSFDFGPFAFLDTFQEDFICNHSDPEGRYAFGQQPGIGLWNLQRLAQALTPVIPSDDLIAILNQYQEALVQPYLRLMRAKLGLSAVDVPSVEQDKQDLDLIGRFTVLMEKNQLDYTQTWRQLGKLDPTSKHSALRDDFIDVSQFDTWYQAYQQRLGAVADIPAWQTERNSVNPKYILRNYLAQEAIIAVEEGNLAPLHLLQKILTQPFAEHAEHEDLAKRPPDWGQGLIMSCSS.

ATP contacts are provided by G81, G83, R84, K103, D115, G116, R166, and R173. D244 (proton acceptor) is an active-site residue. The Mg(2+) site is built by N245 and D254. ATP is bound at residue D254.

This sequence belongs to the SELO family. It depends on Mg(2+) as a cofactor. The cofactor is Mn(2+).

It carries out the reaction L-seryl-[protein] + ATP = 3-O-(5'-adenylyl)-L-seryl-[protein] + diphosphate. The enzyme catalyses L-threonyl-[protein] + ATP = 3-O-(5'-adenylyl)-L-threonyl-[protein] + diphosphate. The catalysed reaction is L-tyrosyl-[protein] + ATP = O-(5'-adenylyl)-L-tyrosyl-[protein] + diphosphate. It catalyses the reaction L-histidyl-[protein] + UTP = N(tele)-(5'-uridylyl)-L-histidyl-[protein] + diphosphate. It carries out the reaction L-seryl-[protein] + UTP = O-(5'-uridylyl)-L-seryl-[protein] + diphosphate. The enzyme catalyses L-tyrosyl-[protein] + UTP = O-(5'-uridylyl)-L-tyrosyl-[protein] + diphosphate. Functionally, nucleotidyltransferase involved in the post-translational modification of proteins. It can catalyze the addition of adenosine monophosphate (AMP) or uridine monophosphate (UMP) to a protein, resulting in modifications known as AMPylation and UMPylation. The polypeptide is Protein nucleotidyltransferase YdiU (Shewanella baltica (strain OS155 / ATCC BAA-1091)).